The chain runs to 127 residues: Dual endothelin-1/VEGF signal peptide receptor (127 aa).

Residues 1 to 69 (MSTFYVTAVP…EMKSRWNWGS (69 aa)) lie on the Extracellular side of the membrane. The chain crosses the membrane as a helical span at residues 70-88 (ITCIMCFTCVGSQLSMSSS). Residues 89–127 (KASNFSGPLQLYQRGIGHITNPYRRPPAPAWPCSSSGTT) lie on the Cytoplasmic side of the membrane.

Prominently expressed in brain and heart tissues. Weakly expressed in aorta, adrenal gland, and lung tissues.

Its subcellular location is the cell membrane. Functionally, in the Dahl salt-resistant strain, acts as a dual receptor for both endothelin-1 and the signal sequence of vascular endothelial growth factor A and does not act as a receptor for angiotensin-2. Does not bind the VEGFA mature protein. In the Dahl salt-sensitive strain, acts as a dual endothelin-1/angiotensin-2 receptor that is functionally coupled to a calcium-mobilizing transduction system, responding equivalently to both endothelin-1/EDN1 and angiotensin-2 peptides in a highly specific manner. May play a role in angiogenesis with a significant role in cardiovascular and neural development. The protein is Dual endothelin-1/VEGF signal peptide receptor of Rattus norvegicus (Rat).